The following is a 486-amino-acid chain: Galactose-1-phosphate uridylyltransferase (486 aa).

It belongs to the galactose-1-phosphate uridylyltransferase type 2 family.

It is found in the cytoplasm. It catalyses the reaction alpha-D-galactose 1-phosphate + UDP-alpha-D-glucose = alpha-D-glucose 1-phosphate + UDP-alpha-D-galactose. It participates in carbohydrate metabolism; galactose metabolism. This is Galactose-1-phosphate uridylyltransferase from Lacticaseibacillus paracasei (strain ATCC 334 / BCRC 17002 / CCUG 31169 / CIP 107868 / KCTC 3260 / NRRL B-441) (Lactobacillus paracasei).